We begin with the raw amino-acid sequence, 159 residues long: Growth arrest and DNA damage-inducible protein GADD45 gamma (159 aa).

The homodimerization stretch occupies residues 43–86; the sequence is VYESAKVLNVDPDNVTFCVLAADEEDEGDIALQIHFTLIQAFCC.

It belongs to the GADD45 family. As to quaternary structure, undergoes concentration-dependent homodimerization, which is required for growth inhibititory activity and enhances interaction with PCNA. Interacts with GADD45GIP1. Interacts with PCNA.

In terms of biological role, involved in the regulation of growth and apoptosis. Mediates activation of stress-responsive MTK1/MEKK4 MAPKKK. The protein is Growth arrest and DNA damage-inducible protein GADD45 gamma (Gadd45g) of Rattus norvegicus (Rat).